The chain runs to 183 residues: Endoribonuclease YbeY (183 aa).

Residues His-142, His-146, and His-152 each coordinate Zn(2+).

The protein belongs to the endoribonuclease YbeY family. It depends on Zn(2+) as a cofactor.

Its subcellular location is the cytoplasm. Single strand-specific metallo-endoribonuclease involved in late-stage 70S ribosome quality control and in maturation of the 3' terminus of the 16S rRNA. The polypeptide is Endoribonuclease YbeY (Trichodesmium erythraeum (strain IMS101)).